Consider the following 193-residue polypeptide: UPF0314 protein Pden_1914 (193 aa).

4 consecutive transmembrane segments (helical) span residues 13–33 (APYW…LWIG), 62–82 (WYTP…WLVA), 148–168 (LPVW…TWLI), and 172–192 (LALN…WQAA).

It belongs to the UPF0314 family.

Its subcellular location is the cell membrane. The chain is UPF0314 protein Pden_1914 from Paracoccus denitrificans (strain Pd 1222).